The following is a 496-amino-acid chain: Glutamyl-tRNA(Gln) amidotransferase subunit A (496 aa).

Residues K75 and S150 each act as charge relay system in the active site. S174 acts as the Acyl-ester intermediate in catalysis.

It belongs to the amidase family. GatA subfamily. Heterotrimer of A, B and C subunits.

The catalysed reaction is L-glutamyl-tRNA(Gln) + L-glutamine + ATP + H2O = L-glutaminyl-tRNA(Gln) + L-glutamate + ADP + phosphate + H(+). In terms of biological role, allows the formation of correctly charged Gln-tRNA(Gln) through the transamidation of misacylated Glu-tRNA(Gln) in organisms which lack glutaminyl-tRNA synthetase. The reaction takes place in the presence of glutamine and ATP through an activated gamma-phospho-Glu-tRNA(Gln). This Burkholderia thailandensis (strain ATCC 700388 / DSM 13276 / CCUG 48851 / CIP 106301 / E264) protein is Glutamyl-tRNA(Gln) amidotransferase subunit A.